Here is a 184-residue protein sequence, read N- to C-terminus: Chaperone protein dnaJ 72 (184 aa).

Residues 3-73 (DHYQVLGVTR…LKRASYNAGS (71 aa)) form the J domain. Residues 133–150 (FLLNLALAGGLYFAFTAI) form a helical membrane-spanning segment.

It belongs to the DnaJ family. C/III subfamily.

It localises to the membrane. Functionally, plays a continuous role in plant development probably in the structural organization of compartments. This is Chaperone protein dnaJ 72 (ATJ72) from Arabidopsis thaliana (Mouse-ear cress).